The chain runs to 1036 residues: Ubiquitin carboxyl-terminal hydrolase 48 (1036 aa).

Positions 89-421 (VGLTNLGASC…NAYMLVYRLQ (333 aa)) constitute a USP domain. The Nucleophile role is filled by C98. The Proton acceptor role is filled by H353. DUSP domains lie at 460–554 (QSVD…KALC), 569–692 (NQLN…YKEC), and 712–825 (MIAK…RIEV). Positions 611 to 644 (DEQDGEAEQSNGKINGSPFSKDESKEEKKEEEEE) are disordered. The span at 618–628 (EQSNGKINGSP) shows a compositional bias: polar residues. The disordered stretch occupies residues 881-924 (APELNVSSSETEEDKEEAKPDGEKDPDFNQSNGGTKRQKTSQQG). Residues S887, S888, and S889 each carry the phosphoserine modification. Basic and acidic residues predominate over residues 896 to 907 (EEAKPDGEKDPD). Over residues 908–924 (FNQSNGGTKRQKTSQQG) the composition is skewed to polar residues. In terms of domain architecture, Ubiquitin-like spans 930 to 1010 (KQVIRRSTRH…ILLKADEPIA (81 aa)). K957 carries the post-translational modification N6-acetyllysine.

Belongs to the peptidase C19 family. In terms of assembly, interacts with TRAF2 and RELA. Interacts with GPS1. In terms of tissue distribution, present in the brain, in particular in the postsynaptic density and the dendritic lipid raft fractions (at protein level).

The protein localises to the cytoplasm. Its subcellular location is the nucleus. It localises to the cell projection. It is found in the cilium. The enzyme catalyses Thiol-dependent hydrolysis of ester, thioester, amide, peptide and isopeptide bonds formed by the C-terminal Gly of ubiquitin (a 76-residue protein attached to proteins as an intracellular targeting signal).. Its function is as follows. Deubiquitinase that recognizes and hydrolyzes the peptide bond at the C-terminal Gly of ubiquitin. Involved in the processing of polyubiquitin precursors as well as that of ubiquitinated proteins. Plays a role in the regulation of NF-kappa-B activation by TNF receptor superfamily via its interactions with RELA and TRAF2. May also play a regulatory role at postsynaptic sites. Plays an important role in cell cycle progression by deubiquitinating Aurora B/AURKB and thereby extending its stability. In the context of H. pylori infection, stabilizes nuclear RELA through deubiquitination, thereby promoting the transcriptional activity of RELA to prolong TNFAIP3 de novo synthesis. Consequently, TNFAIP3 suppresses caspase activity and apoptotic cell death. Also functions in the modulation of the ciliary and synaptic transport as well as cytoskeleton organization, which are key for photoreceptor function and homeostasis. To achieve this, stabilizes the levels of the retinal degeneration-associated proteins ARL3 and UNC119 using distinct mechanisms. Plays a positive role in pyroptosis by stabilizing gasdermin E/GSDME through removal of its 'Lys-48'-linked ubiquitination. This chain is Ubiquitin carboxyl-terminal hydrolase 48 (Usp48), found in Rattus norvegicus (Rat).